The primary structure comprises 1292 residues: HMG domain-containing protein 3 (1292 aa).

The HMG box DNA-binding region spans 42–110 (TKKPRSAYLL…GLDPNSKLSA (69 aa)). Disordered stretches follow at residues 363-391 (SKGS…KLTL), 448-505 (VQPE…GRAR), and 562-588 (KQLG…NRTS). Polar residues predominate over residues 370-391 (RNQQPVTTEQNSSKENASKLTL). Low complexity predominate over residues 467-478 (PTPSEGTSTSSP). The segment covering 562-572 (KQLGQPIQQPS) has biased composition (polar residues).

The protein localises to the nucleus. This chain is HMG domain-containing protein 3, found in Homo sapiens (Human).